A 72-amino-acid polypeptide reads, in one-letter code: MTNPIGINNLSQSSNIANATGDEVVSLDKHINTSATDTDQIQAFIVSTWMAPFQNDMYSEDNPISPYYKIEW.

This is an uncharacterized protein from Escherichia coli (strain K12).